A 289-amino-acid chain; its full sequence is Paired box protein 5 homolog (289 aa).

A DNA-binding region (paired) is located at residues 29–155 (SHTGVNQLGG…SSINRIVRNK (127 aa)). Positions 32 to 88 (GVNQLGGVFVNGRPLADTVRAQIVEMSQHGTRPCDISRQLKVSHGCVSKILGRYYST) are PAI subdomain. The tract at residues 107 to 155 (RVVECIAGYKRANPTMFAWEIRQKLIEDQICGEENVPSVSSINRIVRNK) is RED subdomain. 2 stretches are compositionally biased toward low complexity: residues 166-179 (SVTSSAARPSSATS) and 189-198 (VQQHMQQSTS). A disordered region spans residues 166 to 198 (SVTSSAARPSSATSHHQRSPPRGVQQHMQQSTS).

It is found in the nucleus. The protein localises to the chromosome. In terms of biological role, transcription factor. Binds to specific DNA sequence motifs in regulatory elements, for example in the genes encoding transcription factor lin-48, apoptosis regulator ced-9 and neuropeptide-like protein nlp-2. Specifies cell fate, playing an essential role in embryonic and larval development. Involved in morphogenesis of the vulva and uterus in hermaphrodites and of the rectal epithelium of the tail in males. Plays multiple roles in the development of the egg-laying system, acting in both lin-3/EGF-pathway-dependent and -independent processes. Positively regulates expression of neuropeptide-like proteins nlp-2 and nlp-7 in uvl cells in an EGF-pathway-dependent manner. Involved in negatively modulating apoptosis in germline and somatic cells, acting in partial redundancy with transcription factor pax-2, probably by directly regulating transcription of ced-9. Positively regulates transcription of lin-48 in hindgut cells and functions in the development of the hindgut. This is Paired box protein 5 homolog from Caenorhabditis elegans.